Consider the following 826-residue polypeptide: Lon protease (826 aa).

The Lon N-terminal domain maps to 26-221 (LPMLPVRDVV…AVNGFVSREV (196 aa)). Position 373 to 380 (373 to 380 (GPPGVGKT)) interacts with ATP. Positions 609 to 790 (EPQIGLATGL…NEVLEKALLP (182 aa)) constitute a Lon proteolytic domain. Catalysis depends on residues serine 696 and lysine 739. The disordered stretch occupies residues 788–826 (LLPAEKKKAPPKKKPPKKAAKPKAKKTQPKAKTTEAADK). The segment covering 796-816 (APPKKKPPKKAAKPKAKKTQP) has biased composition (basic residues).

The protein belongs to the peptidase S16 family. As to quaternary structure, homohexamer. Organized in a ring with a central cavity.

The protein resides in the cytoplasm. The catalysed reaction is Hydrolysis of proteins in presence of ATP.. In terms of biological role, ATP-dependent serine protease that mediates the selective degradation of mutant and abnormal proteins as well as certain short-lived regulatory proteins. Required for cellular homeostasis and for survival from DNA damage and developmental changes induced by stress. Degrades polypeptides processively to yield small peptide fragments that are 5 to 10 amino acids long. Binds to DNA in a double-stranded, site-specific manner. This Desulfatibacillum aliphaticivorans protein is Lon protease.